A 634-amino-acid chain; its full sequence is DNA-directed RNA polymerase subunit gamma (634 aa).

Residues Cys-74, Cys-76, Cys-89, and Cys-92 each contribute to the Zn(2+) site. Mg(2+) contacts are provided by Asp-471, Asp-473, and Asp-475.

The protein belongs to the RNA polymerase beta' chain family. RpoC1 subfamily. In cyanobacteria the RNAP catalytic core is composed of 2 alpha, 1 beta, 1 beta', 1 gamma and 1 omega subunit. When a sigma factor is associated with the core the holoenzyme is formed, which can initiate transcription. It depends on Mg(2+) as a cofactor. Requires Zn(2+) as cofactor.

It carries out the reaction RNA(n) + a ribonucleoside 5'-triphosphate = RNA(n+1) + diphosphate. Functionally, DNA-dependent RNA polymerase catalyzes the transcription of DNA into RNA using the four ribonucleoside triphosphates as substrates. The sequence is that of DNA-directed RNA polymerase subunit gamma from Prochlorococcus marinus (strain MIT 9312).